Reading from the N-terminus, the 134-residue chain is MPPKTRAAGVKKVRRKEKKNVAHGHAHIKSTFNNTIVSITDPSGNVISWASAGHVGFKGSRKSTPFAAQMAAENAARKAQEHGMRKVDVFVKGPGSGRETAIRSLQAAGLEVGAIQDVTPTPHNGCRPPKRRRV.

It belongs to the universal ribosomal protein uS11 family. Part of the 30S ribosomal subunit. Interacts with proteins S7 and S18. Binds to IF-3.

In terms of biological role, located on the platform of the 30S subunit, it bridges several disparate RNA helices of the 16S rRNA. Forms part of the Shine-Dalgarno cleft in the 70S ribosome. This chain is Small ribosomal subunit protein uS11, found in Parafrankia sp. (strain EAN1pec).